A 412-amino-acid chain; its full sequence is Imidazolonepropionase (412 aa).

2 residues coordinate Fe(3+): histidine 73 and histidine 75. Residues histidine 73 and histidine 75 each coordinate Zn(2+). Residues arginine 82, tyrosine 145, and histidine 178 each coordinate 4-imidazolone-5-propanoate. Tyrosine 145 serves as a coordination point for N-formimidoyl-L-glutamate. Histidine 247 is a binding site for Fe(3+). Residue histidine 247 coordinates Zn(2+). Residue glutamine 250 coordinates 4-imidazolone-5-propanoate. Aspartate 322 serves as a coordination point for Fe(3+). Aspartate 322 contributes to the Zn(2+) binding site. Positions 324 and 326 each coordinate N-formimidoyl-L-glutamate. Serine 327 serves as a coordination point for 4-imidazolone-5-propanoate.

It belongs to the metallo-dependent hydrolases superfamily. HutI family. Requires Zn(2+) as cofactor. Fe(3+) serves as cofactor.

It is found in the cytoplasm. The catalysed reaction is 4-imidazolone-5-propanoate + H2O = N-formimidoyl-L-glutamate. It participates in amino-acid degradation; L-histidine degradation into L-glutamate; N-formimidoyl-L-glutamate from L-histidine: step 3/3. Its function is as follows. Catalyzes the hydrolytic cleavage of the carbon-nitrogen bond in imidazolone-5-propanoate to yield N-formimidoyl-L-glutamate. It is the third step in the universal histidine degradation pathway. This is Imidazolonepropionase from Shewanella amazonensis (strain ATCC BAA-1098 / SB2B).